We begin with the raw amino-acid sequence, 84 residues long: Keratin-associated protein 19-4 (84 aa).

This sequence belongs to the KRTAP type 19 family. As to quaternary structure, interacts with hair keratins.

In terms of biological role, in the hair cortex, hair keratin intermediate filaments are embedded in an interfilamentous matrix, consisting of hair keratin-associated proteins (KRTAP), which are essential for the formation of a rigid and resistant hair shaft through their extensive disulfide bond cross-linking with abundant cysteine residues of hair keratins. The matrix proteins include the high-sulfur and high-glycine-tyrosine keratins. The protein is Keratin-associated protein 19-4 (KRTAP19-4) of Homo sapiens (Human).